The chain runs to 302 residues: Phosphatidylglycerol--prolipoprotein diacylglyceryl transferase (302 aa).

A run of 3 helical transmembrane segments spans residues 26–46 (WYAL…VMLV), 67–87 (LVLW…VLFY), and 108–128 (IWEG…AIVL). Position 156 (arginine 156) interacts with a 1,2-diacyl-sn-glycero-3-phospho-(1'-sn-glycerol). 2 helical membrane-spanning segments follow: residues 231–251 (GALV…LEGV) and 263–283 (LGLT…VWLL).

Belongs to the Lgt family.

The protein localises to the cell inner membrane. It catalyses the reaction L-cysteinyl-[prolipoprotein] + a 1,2-diacyl-sn-glycero-3-phospho-(1'-sn-glycerol) = an S-1,2-diacyl-sn-glyceryl-L-cysteinyl-[prolipoprotein] + sn-glycerol 1-phosphate + H(+). Its pathway is protein modification; lipoprotein biosynthesis (diacylglyceryl transfer). Functionally, catalyzes the transfer of the diacylglyceryl group from phosphatidylglycerol to the sulfhydryl group of the N-terminal cysteine of a prolipoprotein, the first step in the formation of mature lipoproteins. The polypeptide is Phosphatidylglycerol--prolipoprotein diacylglyceryl transferase (Caulobacter sp. (strain K31)).